The primary structure comprises 122 residues: MIQQESRLKVADNTGAKEILTIRVLGGSGRRYAGIGDVIVATVKDAIPGGNVKKGDVVKAVIVRTKKERRRADGSYIKFDENAAVILKNDGDPRGTRIFGPVGRELRDKKFMKIVSLAPEVL.

The protein belongs to the universal ribosomal protein uL14 family. As to quaternary structure, part of the 50S ribosomal subunit. Forms a cluster with proteins L3 and L19. In the 70S ribosome, L14 and L19 interact and together make contacts with the 16S rRNA in bridges B5 and B8.

Binds to 23S rRNA. Forms part of two intersubunit bridges in the 70S ribosome. This Paenarthrobacter aurescens (strain TC1) protein is Large ribosomal subunit protein uL14.